We begin with the raw amino-acid sequence, 616 residues long: Dihydroxy-acid dehydratase (616 aa).

A Mg(2+)-binding site is contributed by D81. Residue C122 participates in [2Fe-2S] cluster binding. D123 and K124 together coordinate Mg(2+). Residue K124 is modified to N6-carboxylysine. Position 195 (C195) interacts with [2Fe-2S] cluster. Residue E491 participates in Mg(2+) binding. The active-site Proton acceptor is the S517.

Belongs to the IlvD/Edd family. As to quaternary structure, homodimer. [2Fe-2S] cluster serves as cofactor. Mg(2+) is required as a cofactor.

The catalysed reaction is (2R)-2,3-dihydroxy-3-methylbutanoate = 3-methyl-2-oxobutanoate + H2O. It catalyses the reaction (2R,3R)-2,3-dihydroxy-3-methylpentanoate = (S)-3-methyl-2-oxopentanoate + H2O. It functions in the pathway amino-acid biosynthesis; L-isoleucine biosynthesis; L-isoleucine from 2-oxobutanoate: step 3/4. The protein operates within amino-acid biosynthesis; L-valine biosynthesis; L-valine from pyruvate: step 3/4. Functionally, functions in the biosynthesis of branched-chain amino acids. Catalyzes the dehydration of (2R,3R)-2,3-dihydroxy-3-methylpentanoate (2,3-dihydroxy-3-methylvalerate) into 2-oxo-3-methylpentanoate (2-oxo-3-methylvalerate) and of (2R)-2,3-dihydroxy-3-methylbutanoate (2,3-dihydroxyisovalerate) into 2-oxo-3-methylbutanoate (2-oxoisovalerate), the penultimate precursor to L-isoleucine and L-valine, respectively. In Shewanella loihica (strain ATCC BAA-1088 / PV-4), this protein is Dihydroxy-acid dehydratase.